Here is a 382-residue protein sequence, read N- to C-terminus: Galactokinase (382 aa).

34 to 37 (EHTD) contacts substrate. 124–130 (GAGLSSS) is an ATP binding site. The Mg(2+) site is built by S130 and E162. D174 functions as the Proton acceptor in the catalytic mechanism. Substrate is bound at residue Y223.

It belongs to the GHMP kinase family. GalK subfamily.

The protein resides in the cytoplasm. It carries out the reaction alpha-D-galactose + ATP = alpha-D-galactose 1-phosphate + ADP + H(+). The protein operates within carbohydrate metabolism; galactose metabolism. Catalyzes the transfer of the gamma-phosphate of ATP to D-galactose to form alpha-D-galactose-1-phosphate (Gal-1-P). The polypeptide is Galactokinase (Salmonella typhi).